Consider the following 281-residue polypeptide: Ribosomal RNA small subunit methyltransferase A (281 aa).

6 residues coordinate S-adenosyl-L-methionine: Asn-25, Leu-27, Gly-52, Glu-73, Asp-99, and Asn-118.

The protein belongs to the class I-like SAM-binding methyltransferase superfamily. rRNA adenine N(6)-methyltransferase family. RsmA subfamily.

The protein localises to the cytoplasm. It catalyses the reaction adenosine(1518)/adenosine(1519) in 16S rRNA + 4 S-adenosyl-L-methionine = N(6)-dimethyladenosine(1518)/N(6)-dimethyladenosine(1519) in 16S rRNA + 4 S-adenosyl-L-homocysteine + 4 H(+). In terms of biological role, specifically dimethylates two adjacent adenosines (A1518 and A1519) in the loop of a conserved hairpin near the 3'-end of 16S rRNA in the 30S particle. May play a critical role in biogenesis of 30S subunits. The protein is Ribosomal RNA small subunit methyltransferase A of Erythrobacter litoralis (strain HTCC2594).